Here is a 99-residue protein sequence, read N- to C-terminus: NADH-quinone oxidoreductase subunit K (99 aa).

Helical transmembrane passes span 3–23 (PANYLILSALLFTIGTVGVLV), 28–48 (IVVFMSVELMLNAVNLTLVTF), and 59–79 (IMAFFVMVVAAAEVVIGLAII).

It belongs to the complex I subunit 4L family. In terms of assembly, NDH-1 is composed of 14 different subunits. Subunits NuoA, H, J, K, L, M, N constitute the membrane sector of the complex.

The protein localises to the cell membrane. The enzyme catalyses a quinone + NADH + 5 H(+)(in) = a quinol + NAD(+) + 4 H(+)(out). Its function is as follows. NDH-1 shuttles electrons from NADH, via FMN and iron-sulfur (Fe-S) centers, to quinones in the respiratory chain. The immediate electron acceptor for the enzyme in this species is believed to be a menaquinone. Couples the redox reaction to proton translocation (for every two electrons transferred, four hydrogen ions are translocated across the cytoplasmic membrane), and thus conserves the redox energy in a proton gradient. The protein is NADH-quinone oxidoreductase subunit K of Frankia casuarinae (strain DSM 45818 / CECT 9043 / HFP020203 / CcI3).